The following is a 670-amino-acid chain: DNA ligase (670 aa).

Residues 32-36 (DAEYD), 81-82 (SL), and Glu113 each bind NAD(+). Residue Lys115 is the N6-AMP-lysine intermediate of the active site. NAD(+) contacts are provided by Arg136, Glu173, Lys290, and Lys314. Zn(2+) contacts are provided by Cys408, Cys411, Cys426, and Cys432. The BRCT domain maps to 592–670 (EIDSPFAGKT…EAEMIRLLGE (79 aa)).

It belongs to the NAD-dependent DNA ligase family. LigA subfamily. Mg(2+) is required as a cofactor. It depends on Mn(2+) as a cofactor.

It carries out the reaction NAD(+) + (deoxyribonucleotide)n-3'-hydroxyl + 5'-phospho-(deoxyribonucleotide)m = (deoxyribonucleotide)n+m + AMP + beta-nicotinamide D-nucleotide.. In terms of biological role, DNA ligase that catalyzes the formation of phosphodiester linkages between 5'-phosphoryl and 3'-hydroxyl groups in double-stranded DNA using NAD as a coenzyme and as the energy source for the reaction. It is essential for DNA replication and repair of damaged DNA. This is DNA ligase from Yersinia pseudotuberculosis serotype O:1b (strain IP 31758).